Here is a 594-residue protein sequence, read N- to C-terminus: Probable acyl-CoA dehydrogenase (594 aa).

The active-site Proton acceptor is the Glu405.

Belongs to the acyl-CoA dehydrogenase family. Requires FAD as cofactor.

The catalysed reaction is a 2,3-saturated acyl-CoA + A = a 2,3-dehydroacyl-CoA + AH2. The protein operates within lipid metabolism; fatty acid beta-oxidation. Functionally, involved in the degradation of long-chain fatty acids. The chain is Probable acyl-CoA dehydrogenase (fadE) from Bacillus subtilis (strain 168).